The sequence spans 754 residues: Relaxin receptor 2 (754 aa).

Over 1–416 the chain is Extracellular; it reads MIVFLVFKHL…SSFEDLLANN (416 aa). The LDL-receptor class A domain occupies 44–81; the sequence is SCQKGYFPCGNLTKCLPRAFHCDGKDDCGNGADEENCG. 3 cysteine pairs are disulfide-bonded: Cys-45–Cys-58, Cys-52–Cys-71, and Cys-65–Cys-80. N-linked (GlcNAc...) asparagine glycosylation occurs at Asn-54. The N-linked (GlcNAc...) asparagine glycan is linked to Asn-138. 10 LRR repeats span residues 138-159, 162-183, 186-207, 210-231, 234-255, 258-279, 282-303, 306-327, 330-351, and 354-375; these read NVTLLSLKKNKIHSLPDKVFIK, KLKKIFLQHNCIRHISRKAFFG, NLQILYLNHNCITTLRPGIFKD, QLTWLILDDNPITRISQRLFTG, SLFFLSMVNNYLEALPKQMCAQ, QLNWVDLEGNRIKYLTNSTFLS, SLTVLFLPRNQIGFVPEKTFSS, NLGELDLSSNTITELSPHLFKD, LLQKLNLSSNPLMYLHKNQFES, and QLQSLDLERIEIPNINTRMFQP. The N-linked (GlcNAc...) asparagine glycan is linked to Asn-274. N-linked (GlcNAc...) asparagine glycosylation is present at Asn-335. N-linked (GlcNAc...) asparagine glycosylation is present at Asn-378. The chain crosses the membrane as a helical span at residues 417 to 437; the sequence is ILRIFVWVIAFITCFGNLFVI. At 438–455 the chain is on the cytoplasmic side; that stretch reads GMRSFIKAENTTHAMSIK. Residues 456–476 form a helical membrane-spanning segment; sequence ILCCADCLMGVYLFFVGIFDI. At 477–495 the chain is on the extracellular side; it reads KYRGQYQKYALLWMESVQC. A disulfide bridge connects residues Cys-495 and Cys-573. Residues 496–518 traverse the membrane as a helical segment; it reads RLMGFLAMLSTEVSVLLLTYLTL. Residues 519 to 537 are Cytoplasmic-facing; sequence EKFLVIVFPFSNIRPGKRQ. Residues 538–558 form a helical membrane-spanning segment; it reads TSVILICIWMAGFLIAVIPFW. At 559 to 592 the chain is on the extracellular side; sequence NKDYFGNFYGKNGVCFPLYYDQTEDIGSKGYSLG. Residues 593–613 traverse the membrane as a helical segment; the sequence is IFLGVNLLAFLIIVFSYITMF. Topologically, residues 614-639 are cytoplasmic; sequence CSIQKTALQTTEVRNCFGREVAVANR. Residues 640 to 660 form a helical membrane-spanning segment; that stretch reads FFFIVFSDAICWIPVFVVKIL. The Extracellular segment spans residues 661–670; the sequence is SLFRVEIPDT. The chain crosses the membrane as a helical span at residues 671 to 691; the sequence is MTSWIVIFFLPVNSALNPILY. At 692-754 the chain is on the cytoplasmic side; it reads TLTTNFFKDK…LGDSIMKPVS (63 aa).

It belongs to the G-protein coupled receptor 1 family. Expressed mainly in the brain, kidney, muscle, testis, thyroid, uterus, peripheral blood cells and bone marrow.

It localises to the cell membrane. In terms of biological role, receptor for relaxin. The activity of this receptor is mediated by G proteins leading to stimulation of adenylate cyclase and an increase of cAMP. May also be a receptor for Leydig insulin-like peptide (INSL3). The polypeptide is Relaxin receptor 2 (RXFP2) (Homo sapiens (Human)).